The following is a 345-amino-acid chain: UDP-3-O-acylglucosamine N-acyltransferase (345 aa).

Catalysis depends on His-241, which acts as the Proton acceptor.

The protein belongs to the transferase hexapeptide repeat family. LpxD subfamily. Homotrimer.

It catalyses the reaction a UDP-3-O-[(3R)-3-hydroxyacyl]-alpha-D-glucosamine + a (3R)-hydroxyacyl-[ACP] = a UDP-2-N,3-O-bis[(3R)-3-hydroxyacyl]-alpha-D-glucosamine + holo-[ACP] + H(+). It participates in bacterial outer membrane biogenesis; LPS lipid A biosynthesis. Its function is as follows. Catalyzes the N-acylation of UDP-3-O-acylglucosamine using 3-hydroxyacyl-ACP as the acyl donor. Is involved in the biosynthesis of lipid A, a phosphorylated glycolipid that anchors the lipopolysaccharide to the outer membrane of the cell. This is UDP-3-O-acylglucosamine N-acyltransferase from Desulfotalea psychrophila (strain LSv54 / DSM 12343).